Reading from the N-terminus, the 254-residue chain is Matrix protein (254 aa).

It belongs to the paramyxoviruses M protein family. As to quaternary structure, interacts with glycoprotein G (via N-terminus), and protein N. Interacts with protein M2-1; this interaction mediates the association between proteins M and N.

The protein localises to the virion. The protein resides in the host cytoplasm. It is found in the host nucleus. It localises to the host cell membrane. Has a crucial role in virus assembly and budding. The matrix interacts with the RNP complex and this association serves two functions: facilitate virion assembly and inhibit the viral transcriptase activity. Early in infection, M is localized to the nucleus and may inhibit host cell transcription. Later on, M can associate with lipid rafts supposely by interacting with the cytoskeleton and with the cytoplasmic tail of glycoprotein G. The binding of M to host membrane is stabilized by the surface expression of the viral glycoproteins. These interactions may allow virus formation by mediating association of the nucleocapsid with the nascent envelope. The chain is Matrix protein (M) from Avian metapneumovirus (isolate Canada goose/Minnesota/15a/2001) (AMPV).